We begin with the raw amino-acid sequence, 270 residues long: Checkpoint signal transducer rad25 (270 aa).

2 positions are modified to phosphoserine: serine 234 and serine 253. The interval 240-270 (QSAKEEAPAAAAASENEHPEPKESTTDTVKA) is disordered. Over residues 254-270 (ENEHPEPKESTTDTVKA) the composition is skewed to basic and acidic residues.

The protein belongs to the 14-3-3 family. As to quaternary structure, interacts with rad24. Interacts with byr2.

It is found in the cytoplasm. Its function is as follows. Acts in cell cycle and stress checkpoint signaling by sequestering signal transducers regulated by the checkpoints. Required for the DNA damage checkpoint that ensures that DNA damage is repaired before mitosis is attempted. Sequesters byr2 in the cytoplasm to prevent its translocation to the plasma membrane. This Schizosaccharomyces pombe (strain 972 / ATCC 24843) (Fission yeast) protein is Checkpoint signal transducer rad25.